Reading from the N-terminus, the 419-residue chain is N-acylglucosamine 2-epimerase (419 aa).

A leucine-zipper region spans residues 185–206 (LLSLVEQLGEEDEELTNMYAEL). At Ser-418 the chain carries Phosphoserine.

This sequence belongs to the N-acylglucosamine 2-epimerase family. As to quaternary structure, homodimer. Forms a heterodimer with renin and inhibits its activity.

The catalysed reaction is an N-acyl-D-glucosamine = an N-acyl-D-mannosamine. Its pathway is amino-sugar metabolism; N-acetylneuraminate degradation. Functionally, catalyzes the interconversion of N-acetylglucosamine to N-acetylmannosamine. Involved in the N-glycolylneuraminic acid (Neu5Gc) degradation pathway. The protein is N-acylglucosamine 2-epimerase (Renbp) of Mus musculus (Mouse).